The following is a 96-amino-acid chain: Ubiquitin-related modifier 1 (96 aa).

Residue G96 is modified to 1-thioglycine. G96 is covalently cross-linked (Glycyl lysine isopeptide (Gly-Lys) (interchain with K-? in acceptor proteins)).

The protein belongs to the URM1 family. Post-translationally, C-terminal thiocarboxylation occurs in 2 steps, it is first acyl-adenylated (-COAMP) via the hesA/moeB/thiF part of UBA4, then thiocarboxylated (-COSH) via the rhodanese domain of UBA4.

Its subcellular location is the cytoplasm. The protein operates within tRNA modification; 5-methoxycarbonylmethyl-2-thiouridine-tRNA biosynthesis. In terms of biological role, acts as a sulfur carrier required for 2-thiolation of mcm(5)S(2)U at tRNA wobble positions of cytosolic tRNA(Lys), tRNA(Glu) and tRNA(Gln). Serves as sulfur donor in tRNA 2-thiolation reaction by being thiocarboxylated (-COSH) at its C-terminus by the MOCS3 homolog UBA4. The sulfur is then transferred to tRNA to form 2-thiolation of mcm(5)S(2)U. Prior mcm(5) tRNA modification by the elongator complex is required for 2-thiolation. Also acts as a ubiquitin-like protein (UBL) that is covalently conjugated via an isopeptide bond to lysine residues of target proteins such as AHP1. The thiocarboxylated form serves as substrate for conjugation and oxidative stress specifically induces the formation of UBL-protein conjugates. The protein is Ubiquitin-related modifier 1 of Encephalitozoon cuniculi (strain GB-M1) (Microsporidian parasite).